A 772-amino-acid polypeptide reads, in one-letter code: Protein transport protein SEC23 F (772 aa).

Zn(2+)-binding residues include Cys-65, Cys-68, Cys-87, and Cys-90. The zinc finger-like stretch occupies residues Cys-65 to Cys-90.

The protein belongs to the SEC23/SEC24 family. SEC23 subfamily. As to quaternary structure, component of the coat protein complex II (COPII), composed of at least five proteins: the Sec23/24 complex, the Sec13/31 complex and Sar1. Interacts with SEC24A.

It is found in the cytoplasmic vesicle. It localises to the COPII-coated vesicle membrane. The protein localises to the endoplasmic reticulum membrane. Its subcellular location is the membrane. Its function is as follows. Component of the coat protein complex II (COPII) which promotes the formation of transport vesicles from the endoplasmic reticulum (ER). The coat has two main functions, the physical deformation of the endoplasmic reticulum membrane into vesicles and the selection of cargo molecules. The chain is Protein transport protein SEC23 F from Arabidopsis thaliana (Mouse-ear cress).